Consider the following 220-residue polypeptide: MKFLILNCLILFSLISSEATNVKLDREDQNHLVLLNEKNFEKLTQASTGATTGTWFVKFYAPWCSHCRKMAPAWESLAKALKGQVNVADVDVTRNLNLGKRFQIRGYPTLLLFHKGKMYQYEGGERTVEKLSEFALGDFKNAVGAPVPQPLSLFALVSDFVVSGVNEALRVYDAALAGFVTISSFSFLFGLLVGLMLSLFLFTRRATRKPKVLTERKKDK.

Residues 1 to 19 (MKFLILNCLILFSLISSEA) form the signal peptide. One can recognise a Thioredoxin domain in the interval 20-141 (TNVKLDREDQ…SEFALGDFKN (122 aa)). The Lumenal segment spans residues 20 to 181 (TNVKLDREDQ…YDAALAGFVT (162 aa)). Cys-64 and Cys-67 form a disulfide bridge. Residues 182–202 (ISSFSFLFGLLVGLMLSLFLF) traverse the membrane as a helical segment. Topologically, residues 203-220 (TRRATRKPKVLTERKKDK) are cytoplasmic. Residues 217 to 220 (KKDK) carry the Di-lysine motif motif.

It belongs to the protein disulfide isomerase family.

It is found in the endoplasmic reticulum membrane. This is Thioredoxin domain-containing protein from Theileria parva (East coast fever infection agent).